The following is a 269-amino-acid chain: Tryptophan synthase alpha chain (269 aa).

Active-site proton acceptor residues include glutamate 49 and aspartate 60.

The protein belongs to the TrpA family. As to quaternary structure, tetramer of two alpha and two beta chains.

The enzyme catalyses (1S,2R)-1-C-(indol-3-yl)glycerol 3-phosphate + L-serine = D-glyceraldehyde 3-phosphate + L-tryptophan + H2O. It participates in amino-acid biosynthesis; L-tryptophan biosynthesis; L-tryptophan from chorismate: step 5/5. The alpha subunit is responsible for the aldol cleavage of indoleglycerol phosphate to indole and glyceraldehyde 3-phosphate. In Pseudomonas entomophila (strain L48), this protein is Tryptophan synthase alpha chain.